We begin with the raw amino-acid sequence, 389 residues long: NAD-dependent protein deacetylase sirtuin-2 (389 aa).

The tract at residues 1-34 (MAEPDPSDPLETQAGKVQEAQDSDSDTEGGATGG) is disordered. Ala-2 carries the post-translational modification N-acetylalanine. A phosphoserine mark is found at Ser-23 and Ser-25. Thr-27 bears the Phosphothreonine mark. The short motif at 41-51 (LRNLFTQTLGL) is the Nuclear export signal element. Ser-53 carries the phosphoserine modification. The region spanning 57-338 (RLLDELTLEG…LALADLLGWK (282 aa)) is the Deacetylase sirtuin-type domain. NAD(+) is bound by residues 85–89 (AGIST) and 95–97 (DFR). A Phosphoserine modification is found at Ser-100. Residue 167–170 (QNID) participates in NAD(+) binding. The Proton acceptor role is filled by His-187. Cys-195, Cys-200, Cys-221, and Cys-224 together coordinate Zn(2+). Residues 262 to 263 (TS), 286 to 288 (NKE), and Cys-324 contribute to the NAD(+) site. The tract at residues 350–389 (ANIDAQSGSQAPNPSTTISPGKSPPPAKEAARTKEKEEQQ) is disordered. A compositionally biased stretch (polar residues) spans 353-369 (DAQSGSQAPNPSTTISP). Residues Ser-368 and Ser-372 each carry the phosphoserine modification. Residues 378–389 (EAARTKEKEEQQ) are compositionally biased toward basic and acidic residues.

This sequence belongs to the sirtuin family. Class I subfamily. In terms of assembly, interacts with CDC20, FOXO3 and FZR1. Associates with microtubule in primary cortical mature neurons. Homotrimer. Interacts (via both phosphorylated, unphosphorylated, active or inactive forms) with HDAC6; the interaction is necessary for the complex to interact with alpha-tubulin, suggesting that these proteins belong to a large complex that deacetylates the cytoskeleton. Interacts with FOXO1; the interaction is disrupted upon serum-starvation or oxidative stress, leading to increased level of acetylated FOXO1 and induction of autophagy. Interacts with RELA; the interaction occurs in the cytoplasm and is increased in a TNF-alpha-dependent manner. Interacts with HOXA10; the interaction is direct. Interacts with YWHAB and YWHAG; the interactions occur in a AKT-dependent manner and increase SIRT2-dependent TP53 deacetylation. Interacts with MAPK1/ERK2 and MAPK3/ERK1; the interactions increase SIRT2 stability and deacetylation activity. Interacts (phosphorylated form) with KMT5A isoform 2; the interaction is direct, stimulates KMT5A-mediated methyltransferase activity on histone at 'Lys-20' (H4K20me1) and is increased in a H(2)O(2)-induced oxidative stress-dependent manner. Interacts with G6PD; the interaction is enhanced by H(2)O(2) treatment. Interacts with a G1/S-specific cyclin E-CDK2 complex. Interacts with AURKA, CDK5R1 (p35 form) and CDK5 and HIF1A. Interacts with the tRNA ligase SARS1; recruited to the VEGFA promoter via interaction with SARS1. Isoform 2 and isoform 4 associate with microtubules in primary cortical mature neurons. Interacts with BEX4; negatively regulates alpha-tubulin deacetylation by SIRT2. Zn(2+) is required as a cofactor. Post-translationally, phosphorylated at phosphoserine and phosphothreonine. Phosphorylated at Ser-368 by a mitotic kinase CDK1/cyclin B at the G2/M transition; phosphorylation regulates the delay in cell-cycle progression. Phosphorylated at Ser-368 by a mitotic kinase G1/S-specific cyclin E/Cdk2 complex; phosphorylation inactivates SIRT2-mediated alpha-tubulin deacetylation and thereby negatively regulates cell adhesion, cell migration and neurite outgrowth during neuronal differentiation. Phosphorylated by cyclin A/Cdk2 and p35-Cdk5 complexes and to a lesser extent by the cyclin D3/Cdk4 and cyclin B/Cdk1, in vitro. Dephosphorylated at Ser-368 by CDC14A and CDC14B around early anaphase. In terms of processing, acetylated by EP300; acetylation leads both to the decreased of SIRT2-mediated alpha-tubulin deacetylase activity and SIRT2-mediated down-regulation of TP53 transcriptional activity. Ubiquitinated. Isoform 1 is weakly expressed in the cortex at postnatal(P) days P1, P3 and P7, and increases progressively between P17 and older adult cortex. Isoform 1 is also expressed in heart, liver and skeletal muscle, weakly expressed in the striatum and spinal cord. Isoform 2 is not expressed in the cortex at P1, P3 and P7, and increases strongly and progressively between P17 and older adult cortex. Isoform 2 is also expressed in the heart, liver, striatum and spinal cord. Isoform 4 is weakly expressed in older adult cortex and spinal cords. Expressed in the cortex. Expressed in postnatal sciatic nerves during myelination and during remyelination after nerve injury. Expressed in neurons, oligodendrocytes, Schwann cells, Purkinje cells and in astrocytes of white matter. Strongly expressed in preadipocytes compared with differentiated adipocytes. Expressed in cerebellar granule cells. Expressed in the inner ear: in the cochlea, expressed in types I and V fibrocytes in the spiral ligament (SL) and slightly in stria vascularis (SV); in the organ of Corti, expressed in some supporting cells; in the crista ampullaris, expressed in spiral ganglion cells; also expressed in the endolymphatic sac (ES) epithelial cells (at protein level). Expressed in the brain, spinal cord, optic nerve and hippocampus. Strongly expressed in 6-8 week-old ovulated meiosis II oocytes and weakly expressed in 45-58 week-old ovulated meiosis II oocytes. Expressed in the cochlea, vestibule and acoustic nerve of the inner ear.

Its subcellular location is the nucleus. The protein resides in the cytoplasm. It localises to the perinuclear region. The protein localises to the perikaryon. It is found in the cytoskeleton. Its subcellular location is the cell projection. The protein resides in the growth cone. It localises to the myelin membrane. The protein localises to the microtubule organizing center. It is found in the centrosome. Its subcellular location is the spindle. The protein resides in the chromosome. It localises to the midbody. The protein localises to the centriole. The enzyme catalyses N(6)-acetyl-L-lysyl-[protein] + NAD(+) + H2O = 2''-O-acetyl-ADP-D-ribose + nicotinamide + L-lysyl-[protein]. The catalysed reaction is N(6)-tetradecanoyl-L-lysyl-[protein] + NAD(+) + H2O = 2''-O-tetradecanoyl-ADP-D-ribose + nicotinamide + L-lysyl-[protein]. It carries out the reaction N(6)-hexadecanoyl-L-lysyl-[protein] + NAD(+) + H2O = 2''-O-hexadecanoyl-ADP-D-ribose + nicotinamide + L-lysyl-[protein]. Its activity is regulated as follows. Inhibited by Sirtinol, A3 and M15 small molecules. Inhibited by nicotinamide. Inhibited by a macrocyclic peptide inhibitor S2iL5. Inhibited by EP300-induced acetylation. In terms of biological role, NAD-dependent protein deacetylase, which deacetylates internal lysines on histone and alpha-tubulin as well as many other proteins such as key transcription factors. Participates in the modulation of multiple and diverse biological processes such as cell cycle control, genomic integrity, microtubule dynamics, cell differentiation, metabolic networks, and autophagy. Plays a major role in the control of cell cycle progression and genomic stability. Functions in the antephase checkpoint preventing precocious mitotic entry in response to microtubule stress agents, and hence allowing proper inheritance of chromosomes. Positively regulates the anaphase promoting complex/cyclosome (APC/C) ubiquitin ligase complex activity by deacetylating CDC20 and FZR1, then allowing progression through mitosis. Associates both with chromatin at transcriptional start sites (TSSs) and enhancers of active genes. Plays a role in cell cycle and chromatin compaction through epigenetic modulation of the regulation of histone H4 'Lys-20' methylation (H4K20me1) during early mitosis. Specifically deacetylates histone H4 at 'Lys-16' (H4K16ac) between the G2/M transition and metaphase enabling H4K20me1 deposition by KMT5A leading to ulterior levels of H4K20me2 and H4K20me3 deposition throughout cell cycle, and mitotic S-phase progression. Deacetylates KMT5A modulating KMT5A chromatin localization during the mitotic stress response. Also deacetylates histone H3 at 'Lys-57' (H3K56ac) during the mitotic G2/M transition. During oocyte meiosis progression, may deacetylate histone H4 at 'Lys-16' (H4K16ac) and alpha-tubulin, regulating spindle assembly and chromosome alignment by influencing microtubule dynamics and kinetochore function. Deacetylates histone H4 at 'Lys-16' (H4K16ac) at the VEGFA promoter and thereby contributes to regulate expression of VEGFA, a key regulator of angiogenesis. Deacetylates alpha-tubulin at 'Lys-40' and hence controls neuronal motility, oligodendroglial cell arbor projection processes and proliferation of non-neuronal cells. Phosphorylation at Ser-368 by a G1/S-specific cyclin E-CDK2 complex inactivates SIRT2-mediated alpha-tubulin deacetylation, negatively regulating cell adhesion, cell migration and neurite outgrowth during neuronal differentiation. Deacetylates PARD3 and participates in the regulation of Schwann cell peripheral myelination formation during early postnatal development and during postinjury remyelination. Involved in several cellular metabolic pathways. Plays a role in the regulation of blood glucose homeostasis by deacetylating and stabilizing phosphoenolpyruvate carboxykinase PCK1 activity in response to low nutrient availability. Acts as a key regulator in the pentose phosphate pathway (PPP) by deacetylating and activating the glucose-6-phosphate G6PD enzyme, and therefore, stimulates the production of cytosolic NADPH to counteract oxidative damage. Maintains energy homeostasis in response to nutrient deprivation as well as energy expenditure by inhibiting adipogenesis and promoting lipolysis. Attenuates adipocyte differentiation by deacetylating and promoting FOXO1 interaction to PPARG and subsequent repression of PPARG-dependent transcriptional activity. Plays a role in the regulation of lysosome-mediated degradation of protein aggregates by autophagy in neuronal cells. Deacetylates FOXO1 in response to oxidative stress or serum deprivation, thereby negatively regulating FOXO1-mediated autophagy. Deacetylates a broad range of transcription factors and co-regulators regulating target gene expression. Deacetylates transcriptional factor FOXO3 stimulating the ubiquitin ligase SCF(SKP2)-mediated FOXO3 ubiquitination and degradation. Deacetylates HIF1A and therefore promotes HIF1A degradation and inhibition of HIF1A transcriptional activity in tumor cells in response to hypoxia. Deacetylates RELA in the cytoplasm inhibiting NF-kappaB-dependent transcription activation upon TNF-alpha stimulation. Inhibits transcriptional activation by deacetylating p53/TP53 and EP300. Also deacetylates EIF5A. Functions as a negative regulator on oxidative stress-tolerance in response to anoxia-reoxygenation conditions. Plays a role as tumor suppressor. In addition to protein deacetylase activity, also has activity toward long-chain fatty acyl groups and mediates protein-lysine demyristoylation and depalmitoylation of target proteins, such as ARF6 and KRAS, thereby regulating their association with membranes. Functionally, deacetylates alpha-tubulin. The polypeptide is NAD-dependent protein deacetylase sirtuin-2 (Sirt2) (Mus musculus (Mouse)).